A 76-amino-acid chain; its full sequence is Dermaseptin-H1 (76 aa).

An N-terminal signal peptide occupies residues 1-22; that stretch reads MDILKKSLFIVLFLGLVSLSIC. Residues 23-45 constitute a propeptide that is removed on maturation; it reads EEEKRENEDEEEQEDDEQSEEKR. The segment at 25-44 is disordered; that stretch reads EKRENEDEEEQEDDEQSEEK. A compositionally biased stretch (acidic residues) spans 30–41; that stretch reads EDEEEQEDDEQS. Glutamine 73 bears the Glutamine amide mark. The propeptide occupies 75–76; that stretch reads EQ.

As to expression, expressed by the skin glands.

It is found in the secreted. Its function is as follows. Has antimicrobial activity. The sequence is that of Dermaseptin-H1 from Pithecopus hypochondrialis (Orange-legged leaf frog).